Reading from the N-terminus, the 72-residue chain is Translation initiation factor IF-1 (72 aa).

The region spanning 1-72 (MARDDVIEVD…DRGRITFRYK (72 aa)) is the S1-like domain.

The protein belongs to the IF-1 family. In terms of assembly, component of the 30S ribosomal translation pre-initiation complex which assembles on the 30S ribosome in the order IF-2 and IF-3, IF-1 and N-formylmethionyl-tRNA(fMet); mRNA recruitment can occur at any time during PIC assembly.

The protein localises to the cytoplasm. In terms of biological role, one of the essential components for the initiation of protein synthesis. Stabilizes the binding of IF-2 and IF-3 on the 30S subunit to which N-formylmethionyl-tRNA(fMet) subsequently binds. Helps modulate mRNA selection, yielding the 30S pre-initiation complex (PIC). Upon addition of the 50S ribosomal subunit IF-1, IF-2 and IF-3 are released leaving the mature 70S translation initiation complex. The protein is Translation initiation factor IF-1 of Helicobacter acinonychis (strain Sheeba).